We begin with the raw amino-acid sequence, 62 residues long: U-myrmeciitoxin(01)-Mg3a (62 aa).

The first 24 residues, Met1 to Ala24, serve as a signal peptide directing secretion.

As to expression, expressed by the venom gland.

Its subcellular location is the secreted. Functionally, may have antimicrobial properties, like most ant linear peptides. The protein is U-myrmeciitoxin(01)-Mg3a of Myrmecia gulosa (Red bulldog ant).